Consider the following 858-residue polypeptide: Leucine--tRNA ligase (858 aa).

Residues 42–52 (PYPSGRLHMGH) carry the 'HIGH' region motif. The 'KMSKS' region signature appears at 618–622 (KMSKS). K621 contacts ATP.

The protein belongs to the class-I aminoacyl-tRNA synthetase family.

It is found in the cytoplasm. The enzyme catalyses tRNA(Leu) + L-leucine + ATP = L-leucyl-tRNA(Leu) + AMP + diphosphate. In Photobacterium profundum (strain SS9), this protein is Leucine--tRNA ligase.